The primary structure comprises 288 residues: ATP synthase gamma chain (288 aa).

Belongs to the ATPase gamma chain family. F-type ATPases have 2 components, CF(1) - the catalytic core - and CF(0) - the membrane proton channel. CF(1) has five subunits: alpha(3), beta(3), gamma(1), delta(1), epsilon(1). CF(0) has three main subunits: a, b and c.

Its subcellular location is the cell inner membrane. Its function is as follows. Produces ATP from ADP in the presence of a proton gradient across the membrane. The gamma chain is believed to be important in regulating ATPase activity and the flow of protons through the CF(0) complex. This is ATP synthase gamma chain from Actinobacillus pleuropneumoniae serotype 5b (strain L20).